The following is a 98-amino-acid chain: MAAVTGIALGMIETRGLVPAIEAADAMTKAAEVRLVGRQFVGGGYVTVLVRGETGAVNAAVRAGADACERVGDGLVAAHIIARVHSEVENILPKAPEA.

Residues 8-93 form the BMC domain; that stretch reads ALGMIETRGL…VHSEVENILP (86 aa).

Belongs to the bacterial microcompartments protein family. CsoS1 subfamily. Homohexamer with a small central pore. Interacts with the N-terminus (residues 1-136) of RuBisCO (CbbL).

It is found in the carboxysome. In terms of biological role, one of shell proteins of the carboxysome, a polyhedral inclusion where RuBisCO (ribulose bisphosphate carboxylase, ccbL-ccbS) is sequestered. Assembles into hexamers which make sheets that form the facets of the polyhedral carboxysome. The shell probably limits the diffusion of CO(2) into and out of the carboxysome. There are estimated to be 2970 CsoS1A/CsoS1C proteins per carboxysome (the proteins differ by only 1 residue). Unlike beta-carboxysomes, alpha-carboxysomes (Cb) can form without cargo protein. CsoS2 is essential for Cb formation and is also capable of targeting foreign proteins to the Cb. The Cb shell assembles with the aid of CsoS2; CsoS1A, CsoS1B and CsoS1C form the majority of the shell while CsoS4A and CsoS4B form vertices. CsoS1D forms pseudohexamers that probably control metabolite flux into and out of the shell. The chain is Carboxysome shell protein CsoS1C from Halothiobacillus neapolitanus (strain ATCC 23641 / c2) (Thiobacillus neapolitanus).